A 472-amino-acid chain; its full sequence is ATP-dependent rRNA helicase rrp3 (472 aa).

Residues 1–52 form a disordered region; the sequence is MPAIKKRKIAREAPQQEDHSDSEAHSSASEDAAPNTTEQEQEPSEAPKQAPK. A compositionally biased stretch (basic and acidic residues) spans 10–24; it reads AREAPQQEDHSDSEA. The Q motif signature appears at 52–80; that stretch reads KSFKELGLIEQLCEACDSMGYKAPTAIQA. The Helicase ATP-binding domain maps to 83–254; the sequence is IPLALQGRDL…RASLQNPLRV (172 aa). Residue 96–103 coordinates ATP; the sequence is AETGSGKT. The short motif at 202 to 205 is the DEAD box element; it reads DEAD. In terms of domain architecture, Helicase C-terminal spans 282 to 426; it reads YLVYLLNEFV…EYPAEKDEVM (145 aa). The tract at residues 443–472 is disordered; that stretch reads MKNYDEKKGSRGKKFAKGKRSREDMDQEEG. The span at 452–462 shows a compositional bias: basic residues; it reads SRGKKFAKGKR.

This sequence belongs to the DEAD box helicase family. DDX47/RRP3 subfamily. In terms of assembly, interacts with the SSU processome.

The protein localises to the nucleus. It catalyses the reaction ATP + H2O = ADP + phosphate + H(+). In terms of biological role, ATP-dependent rRNA helicase required for pre-ribosomal RNA processing. Involved in the maturation of the 35S-pre-rRNA and to its cleavage to mature 18S rRNA. This chain is ATP-dependent rRNA helicase rrp3, found in Aspergillus oryzae (strain ATCC 42149 / RIB 40) (Yellow koji mold).